The primary structure comprises 206 residues: MNKANLFIISAPSGAGKTSLVRALVKALAEIKISISHTTRPKRPGDQEGVDYFFIDETRFQAMVKEGAFLEHATIYERHYGTEKDWVLRQLKAGRDVLLEIDWQGARQIRELFPPALSIFILPPSIEALRERLIKRRQDDTAIIEQRLALAREEMAHYKEFDYLVVNDNFDQAVQNLIHIISAERLQRDVQEKKLSRLLAELVEKQ.

In terms of domain architecture, Guanylate kinase-like spans alanine 4–serine 182. An ATP-binding site is contributed by alanine 11–threonine 18.

This sequence belongs to the guanylate kinase family.

The protein resides in the cytoplasm. The catalysed reaction is GMP + ATP = GDP + ADP. Essential for recycling GMP and indirectly, cGMP. The sequence is that of Guanylate kinase from Coxiella burnetii (strain RSA 493 / Nine Mile phase I).